The sequence spans 158 residues: 6,7-dimethyl-8-ribityllumazine synthase (158 aa).

Residues Phe-22, 56 to 58 (ALE), and 80 to 82 (VVI) contribute to the 5-amino-6-(D-ribitylamino)uracil site. Residue 85–86 (ET) coordinates (2S)-2-hydroxy-3-oxobutyl phosphate. The Proton donor role is filled by His-88. Asn-113 serves as a coordination point for 5-amino-6-(D-ribitylamino)uracil. A (2S)-2-hydroxy-3-oxobutyl phosphate-binding site is contributed by Arg-127.

This sequence belongs to the DMRL synthase family.

The catalysed reaction is (2S)-2-hydroxy-3-oxobutyl phosphate + 5-amino-6-(D-ribitylamino)uracil = 6,7-dimethyl-8-(1-D-ribityl)lumazine + phosphate + 2 H2O + H(+). It functions in the pathway cofactor biosynthesis; riboflavin biosynthesis; riboflavin from 2-hydroxy-3-oxobutyl phosphate and 5-amino-6-(D-ribitylamino)uracil: step 1/2. Catalyzes the formation of 6,7-dimethyl-8-ribityllumazine by condensation of 5-amino-6-(D-ribitylamino)uracil with 3,4-dihydroxy-2-butanone 4-phosphate. This is the penultimate step in the biosynthesis of riboflavin. The sequence is that of 6,7-dimethyl-8-ribityllumazine synthase from Neisseria meningitidis serogroup C / serotype 2a (strain ATCC 700532 / DSM 15464 / FAM18).